Here is a 419-residue protein sequence, read N- to C-terminus: MGMTMTQKILADHAGLDKVSPGQLIKAKLDMVLGNDITTPVAVKEFRKIGVNKVFDVNKIAIVPDHFTPNKDIKSAEQVKFIREFAREMGIVNFFEVGQMGVEHALLPEKGLVVPGDVVIGADSHTCTYGALGAFSTGIGSTDMAAGMATGEAWFKVPEAMKFVLKGKPGKWVSGKDIILHIIGMIGVDGALYRSMEFTGDGVAHLSMDDRFAMANMAIEAGAKNGIFEVDEKTIEYVKEHSTRQYKVYKADEDAEYVATYEIDLSQVKPTVAFPHLPSNTRTIDNVGNIKIDQVVIGSCTNGRIEDLRVAAEVLKGRKVHKDVRCIIIPATQKIWKQAMNEGLFDIFIDAGAAVSTPTCGPCLGGHMGILAKGERAVATTNRNFVGRMGHPESEIYLASPAVAAASAVLGRIGSPDEL.

Cysteine 300, cysteine 360, and cysteine 363 together coordinate [4Fe-4S] cluster.

The protein belongs to the aconitase/IPM isomerase family. LeuC type 2 subfamily. In terms of assembly, heterodimer of LeuC and LeuD. [4Fe-4S] cluster is required as a cofactor.

It carries out the reaction (2R,3S)-3-isopropylmalate = (2S)-2-isopropylmalate. It participates in amino-acid biosynthesis; L-leucine biosynthesis; L-leucine from 3-methyl-2-oxobutanoate: step 2/4. In terms of biological role, catalyzes the isomerization between 2-isopropylmalate and 3-isopropylmalate, via the formation of 2-isopropylmaleate. This chain is 3-isopropylmalate dehydratase large subunit, found in Acetivibrio thermocellus (strain ATCC 27405 / DSM 1237 / JCM 9322 / NBRC 103400 / NCIMB 10682 / NRRL B-4536 / VPI 7372) (Clostridium thermocellum).